The primary structure comprises 443 residues: Xaa-Pro dipeptidase (443 aa).

5 residues coordinate Mn(2+): aspartate 246, aspartate 257, histidine 339, glutamate 384, and glutamate 423.

Belongs to the peptidase M24B family. Bacterial-type prolidase subfamily. It depends on Mn(2+) as a cofactor.

The catalysed reaction is Xaa-L-Pro dipeptide + H2O = an L-alpha-amino acid + L-proline. In terms of biological role, splits dipeptides with a prolyl residue in the C-terminal position. The polypeptide is Xaa-Pro dipeptidase (Escherichia coli (strain 55989 / EAEC)).